A 258-amino-acid chain; its full sequence is Ribonuclease PH (258 aa).

Phosphate contacts are provided by residues R88 and 126-128 (GTR).

Belongs to the RNase PH family. As to quaternary structure, homohexameric ring arranged as a trimer of dimers.

The catalysed reaction is tRNA(n+1) + phosphate = tRNA(n) + a ribonucleoside 5'-diphosphate. Its function is as follows. Phosphorolytic 3'-5' exoribonuclease that plays an important role in tRNA 3'-end maturation. Removes nucleotide residues following the 3'-CCA terminus of tRNAs; can also add nucleotides to the ends of RNA molecules by using nucleoside diphosphates as substrates, but this may not be physiologically important. Probably plays a role in initiation of 16S rRNA degradation (leading to ribosome degradation) during starvation. This chain is Ribonuclease PH, found in Mycobacteroides abscessus (strain ATCC 19977 / DSM 44196 / CCUG 20993 / CIP 104536 / JCM 13569 / NCTC 13031 / TMC 1543 / L948) (Mycobacterium abscessus).